The primary structure comprises 387 residues: Protein spaetzle 5 (387 aa).

The N-terminal stretch at 1–29 is a signal peptide; the sequence is MTKSIKRPPPFSCKQVLLTYVILAYTVAA. The propeptide occupies 30–284; sequence HSSPPPCGLY…PLKKRSRTKR (255 aa). Residues 133–197 are disordered; the sequence is QTPFGGNPQR…SGGHLYINQS (65 aa). Residues Asn-195 and Asn-204 are each glycosylated (N-linked (GlcNAc...) asparagine). 2 disordered regions span residues 219–256 and 269–291; these read KQRQ…QSKR and GVEA…GRST. A compositionally biased stretch (acidic residues) spans 237–247; it reads QTEEAEEQDNP. The span at 276–286 shows a compositional bias: basic residues; sequence LKKRSRTKRQS. A Spaetzle domain is found at 291–384; sequence TLCQTTSQFI…WFPSCCVCTI (94 aa). Disulfide bonds link Cys-293–Cys-350, Cys-331–Cys-380, and Cys-340–Cys-382.

In terms of assembly, homodimer; disulfide-linked. Detected in the fan-shaped body which is a component of the locomotion center in the central nervous system (CNS) (at protein level).

Neurotrophin which may function as a ligand for the Toll-related receptors Toll-6 and Toll-7. Binds to Toll-7 and Toll-6, and probably acts as their ligands in the promotion of motor axon targeting and neuronal survival in the central nervous system (CNS). Involved in synaptic targeting of ISNb/d motorneurons and also some SNa motorneurons. May be involved in the normal development of specific neurons at the neuromuscular junction. The polypeptide is Protein spaetzle 5 (Drosophila melanogaster (Fruit fly)).